The following is a 1700-amino-acid chain: Rho guanine nucleotide exchange factor 28 (1700 aa).

Residues 288-343 (TEKATMPSGAAETEEEVRNLESGRSPSEEEEDAKSIKSQVDGPSEHEDQDRLPLDR) form a disordered region. 2 positions are modified to phosphoserine: serine 312 and serine 314. Positions 330-343 (PSEHEDQDRLPLDR) are enriched in basic and acidic residues. Serine 478 carries the post-translational modification Phosphoserine. The interval 483–532 (VADSEGEGGSEPPICYAVGSQSSPRTGLPSGDELDSFETNTEPDCNISRT) is disordered. Residue serine 623 is modified to Phosphoserine. Residues 651 to 698 (RHQFVPGTFSGVLQCSGCDKTLLGKESLQCANCKANTHKGCKDAVPPC) form a Phorbol-ester/DAG-type zinc finger. Residues 846 to 1041 (KRQDVIFELM…KDMIAAVDLK (196 aa)) form the DH domain. A PH domain is found at 1095-1184 (ATGRFKDILA…NWMRRIQQAV (90 aa)). Disordered stretches follow at residues 1184–1205 (VESC…RRKA) and 1289–1328 (KMGD…TEGT). Residues 1191–1205 (EGGRTSESDEERRKA) show a composition bias toward basic and acidic residues. Residues 1292 to 1301 (DVSQSSEESP) are interaction with PTK2/FAK1; required for regulation of axonal branching and synapse formation. A compositionally biased stretch (polar residues) spans 1309–1325 (TPSTQDVPASPTASLVT). The interval 1369–1380 (IIQAIQNLTRLL) is mediates cytoplasmic retention and interaction with YWHAH. The stretch at 1421 to 1522 (QEKSRYLEKQ…RERQKMRVQQ (102 aa)) forms a coiled coil. Residues 1421–1700 (QEKSRYLEKQ…DGAEENILYL (280 aa)) form an interaction with microtubules region. The tract at residues 1493 to 1524 (QLQEYQQSLERLREGQRMVERERQKMRVQQGL) is RNA-binding. At serine 1535 the chain carries Phosphoserine. Residues 1563–1576 (FINEAFGHMSLNTS) form a mediates cytoplasmic retention and interaction with MAPK8IP1 region. The segment at 1602–1700 (SESPTELKID…DGAEENILYL (99 aa)) is disordered. Position 1604 is a phosphoserine (serine 1604). Residues 1647-1663 (DLDSFQSESSSPQDSNQ) show a composition bias toward low complexity. The span at 1664–1675 (RGPQPQTLTTEA) shows a compositional bias: polar residues.

Homooligomer; forms some cytoplasmic aggregates. Forms a complex with MAPK8 and MAPK8IP1. Interacts with RHOA. Interacts with microtubules. Interacts with YWHAE and YWHAH. Interacts with PTK2/FAK1. Interacts with NEFL. Interacts with CTNND2; prevents interaction with RHOA. In terms of processing, phosphorylated on tyrosine upon stimulation of cells by laminin. Highly enriched in the brain (at protein level). Also detected in lung and kidney.

The protein localises to the cytoplasm. The protein resides in the cell membrane. In terms of biological role, functions as a RHOA-specific guanine nucleotide exchange factor regulating signaling pathways downstream of integrins and growth factor receptors. Functions in axonal branching, synapse formation and dendritic morphogenesis. Also functions in focal adhesion formation, cell motility and B-lymphocytes activation. May regulate NEFL expression and aggregation and play a role in apoptosis. This is Rho guanine nucleotide exchange factor 28 (Arhgef28) from Mus musculus (Mouse).